A 459-amino-acid chain; its full sequence is Transcription factor mlcR (459 aa).

Residues 21–53 constitute a DNA-binding region (zn(2)-C6 fungal-type); that stretch reads CDRCHAQKLKCTGSNANLVRAQCQRCQQAGLRC. 2 disordered regions span residues 64–84 and 135–170; these read LHKEAAAGTTRATETSQPMTA and DPESFPGGWPQPNTFRDDANSNESSGIPDLGYDFEG. The segment covering 69-78 has biased composition (low complexity); sequence AAGTTRATET.

Its subcellular location is the nucleus. Functionally, transcription factor that regulates the gene cluster that mediates the biosynthesis of compactin, also known as mevastatin or ML-236B, and which acts as a potent competitive inhibitor of HMG-CoA reductase. Binds to the consensus-binding motif 5'-WCGG-N(6)-TCGG-3' of target genes. This is Transcription factor mlcR from Penicillium citrinum.